A 156-amino-acid chain; its full sequence is Large ribosomal subunit protein uL15 (156 aa).

Over residues M1–T13 the composition is skewed to basic and acidic residues. Residues M1 to K39 are disordered. The span at R21 to V35 shows a compositional bias: gly residues.

The protein belongs to the universal ribosomal protein uL15 family. In terms of assembly, part of the 50S ribosomal subunit.

Functionally, binds to the 23S rRNA. This is Large ribosomal subunit protein uL15 from Rhizobium meliloti (strain 1021) (Ensifer meliloti).